We begin with the raw amino-acid sequence, 117 residues long: Movement protein TGB2 (117 aa).

Residues 1–11 are Cytoplasmic-facing; the sequence is MPLIPPPNPQK. A helical transmembrane segment spans residues 12–32; sequence TYQIAVLALGLVLLLAFVLIS. The Lumenal portion of the chain corresponds to 33–78; it reads DHSPKVGDHLHNLPFGGEYKDGTKTIKYFQRPNQHSLSKTLAKSHN. Residues 79–99 form a helical membrane-spanning segment; the sequence is TTIFLIILGLIGTLHGLHYFS. Over 100–117 the chain is Cytoplasmic; the sequence is NNRRISSSLHCVLCQNKH.

It belongs to the Tymovirales TGBp2 protein family.

The protein resides in the host endoplasmic reticulum membrane. In terms of biological role, plays a role in viral cell-to-cell propagation, by facilitating genome transport to neighboring plant cells through plasmosdesmata,. This Trifolium (WCMV) protein is Movement protein TGB2.